The primary structure comprises 167 residues: uncharacterized protein (167 aa).

The tract at residues 148–167 (NKESRGENDGGEERESANIY) is disordered.

This is an uncharacterized protein from Homo sapiens (Human).